The chain runs to 536 residues: Phosphoenolpyruvate carboxykinase (ATP) (536 aa).

Substrate contacts are provided by R61, Y195, and K201. Residues K201, H220, and 236–244 (GLSGTGKTT) contribute to the ATP site. Mn(2+) is bound by residues K201 and H220. Residue D257 participates in Mn(2+) binding. ATP-binding residues include E285, R322, and T447. R322 is a substrate binding site.

Belongs to the phosphoenolpyruvate carboxykinase (ATP) family. The cofactor is Mn(2+).

The protein localises to the cytoplasm. The catalysed reaction is oxaloacetate + ATP = phosphoenolpyruvate + ADP + CO2. The protein operates within carbohydrate biosynthesis; gluconeogenesis. Its function is as follows. Involved in the gluconeogenesis. Catalyzes the conversion of oxaloacetate (OAA) to phosphoenolpyruvate (PEP) through direct phosphoryl transfer between the nucleoside triphosphate and OAA. This is Phosphoenolpyruvate carboxykinase (ATP) from Rhizobium etli (strain CIAT 652).